The following is a 150-amino-acid chain: MKVSRHTKILEIINLKDIETQEELAEELRRSGMEVTQATVSRDIKELKLIKVLSSKGRYKYATISPTESFLSNKLVTIFAQTVLNVDRVNNMVVVKTISGSANAAAEAIDSLNLDGIAGSIAGDNTIFILSRSEETAFNIVQKLKKMINE.

It belongs to the ArgR family.

Its subcellular location is the cytoplasm. It participates in amino-acid biosynthesis; L-arginine biosynthesis [regulation]. Regulates arginine biosynthesis genes. This chain is Arginine repressor, found in Clostridium acetobutylicum (strain ATCC 824 / DSM 792 / JCM 1419 / IAM 19013 / LMG 5710 / NBRC 13948 / NRRL B-527 / VKM B-1787 / 2291 / W).